We begin with the raw amino-acid sequence, 687 residues long: Putative metabolite transport protein YDL199C (687 aa).

A disordered region spans residues M1–A22. At M1–S122 the chain is on the extracellular side. Residues M7–A22 are compositionally biased toward polar residues. S90 carries the post-translational modification Phosphoserine. A helical transmembrane segment spans residues F123–G143. At N144 to N164 the chain is on the cytoplasmic side. Residues I165–L185 form a helical membrane-spanning segment. At E186–K192 the chain is on the extracellular side. Residues M193–N213 form a helical membrane-spanning segment. Topologically, residues Q214 to C216 are cytoplasmic. A helical transmembrane segment spans residues L217–I237. Residues Y238–T251 lie on the Extracellular side of the membrane. A helical membrane pass occupies residues L252–C272. The Cytoplasmic segment spans residues A273–Y283. Residues P284–L304 traverse the membrane as a helical segment. The Extracellular segment spans residues E305–Y410. Residues L411–L431 traverse the membrane as a helical segment. Topologically, residues R432–N439 are cytoplasmic. The helical transmembrane segment at V440–F460 threads the bilayer. The Extracellular portion of the chain corresponds to P461–S469. The helical transmembrane segment at I470–M490 threads the bilayer. At T491–Q500 the chain is on the cytoplasmic side. The chain crosses the membrane as a helical span at residues A501–I521. Residues T522–F533 are Extracellular-facing. Residues Y534 to I554 form a helical membrane-spanning segment. Topologically, residues E555–A687 are cytoplasmic. 2 disordered regions span residues L561–S587 and S654–A687. Residues D660 to S673 show a composition bias toward polar residues.

This sequence belongs to the major facilitator superfamily. Sugar transporter (TC 2.A.1.1) family.

The protein localises to the membrane. The chain is Putative metabolite transport protein YDL199C from Saccharomyces cerevisiae (strain ATCC 204508 / S288c) (Baker's yeast).